Consider the following 271-residue polypeptide: Effector CFEM6 (271 aa).

The signal sequence occupies residues 1–17 (MKYSMITLGAFAMMAVA). In terms of domain architecture, CFEM spans 18-111 (QLSSLPACGQ…LGPATAVVAS (94 aa)). 4 cysteine pairs are disulfide-bonded: Cys-25/Cys-68, Cys-29/Cys-63, Cys-42/Cys-49, and Cys-51/Cys-84. Residue Asp-46 participates in heme binding. The GPI-anchor amidated serine moiety is linked to residue Ser-247. Positions 248-271 (SAGGARQTAFAGLAAAAGFAAIIL) are cleaved as a propeptide — removed in mature form.

It belongs to the RBT5 family.

Its subcellular location is the cell membrane. The protein localises to the secreted. The protein resides in the host nucleus. It localises to the host cell membrane. It is found in the host chloroplast envelope. Its function is as follows. Appears to function during host infection, and may play a role in suppressing the host immune response. This chain is Effector CFEM6, found in Marssonina brunnea f. sp. multigermtubi (strain MB_m1) (Marssonina leaf spot fungus).